Consider the following 416-residue polypeptide: Gamma-glutamyl phosphate reductase (416 aa).

Belongs to the gamma-glutamyl phosphate reductase family.

Its subcellular location is the cytoplasm. It catalyses the reaction L-glutamate 5-semialdehyde + phosphate + NADP(+) = L-glutamyl 5-phosphate + NADPH + H(+). Its pathway is amino-acid biosynthesis; L-proline biosynthesis; L-glutamate 5-semialdehyde from L-glutamate: step 2/2. In terms of biological role, catalyzes the NADPH-dependent reduction of L-glutamate 5-phosphate into L-glutamate 5-semialdehyde and phosphate. The product spontaneously undergoes cyclization to form 1-pyrroline-5-carboxylate. This is Gamma-glutamyl phosphate reductase from Streptococcus thermophilus (strain ATCC BAA-491 / LMD-9).